The following is a 1024-amino-acid chain: Error-prone DNA polymerase (1024 aa).

The protein belongs to the DNA polymerase type-C family. DnaE2 subfamily.

It is found in the cytoplasm. It carries out the reaction DNA(n) + a 2'-deoxyribonucleoside 5'-triphosphate = DNA(n+1) + diphosphate. DNA polymerase involved in damage-induced mutagenesis and translesion synthesis (TLS). It is not the major replicative DNA polymerase. The polypeptide is Error-prone DNA polymerase (Vibrio vulnificus (strain YJ016)).